We begin with the raw amino-acid sequence, 436 residues long: 3-ketoacyl-CoA thiolase (436 aa).

The Acyl-thioester intermediate role is filled by C99. Catalysis depends on proton acceptor residues H392 and C422.

The protein belongs to the thiolase-like superfamily. Thiolase family. In terms of assembly, heterotetramer of two alpha chains (FadJ) and two beta chains (FadI).

Its subcellular location is the cytoplasm. It catalyses the reaction an acyl-CoA + acetyl-CoA = a 3-oxoacyl-CoA + CoA. It functions in the pathway lipid metabolism; fatty acid beta-oxidation. Functionally, catalyzes the final step of fatty acid oxidation in which acetyl-CoA is released and the CoA ester of a fatty acid two carbons shorter is formed. In Escherichia coli O7:K1 (strain IAI39 / ExPEC), this protein is 3-ketoacyl-CoA thiolase.